A 151-amino-acid chain; its full sequence is SsrA-binding protein (151 aa).

The protein belongs to the SmpB family.

It is found in the cytoplasm. Functionally, required for rescue of stalled ribosomes mediated by trans-translation. Binds to transfer-messenger RNA (tmRNA), required for stable association of tmRNA with ribosomes. tmRNA and SmpB together mimic tRNA shape, replacing the anticodon stem-loop with SmpB. tmRNA is encoded by the ssrA gene; the 2 termini fold to resemble tRNA(Ala) and it encodes a 'tag peptide', a short internal open reading frame. During trans-translation Ala-aminoacylated tmRNA acts like a tRNA, entering the A-site of stalled ribosomes, displacing the stalled mRNA. The ribosome then switches to translate the ORF on the tmRNA; the nascent peptide is terminated with the 'tag peptide' encoded by the tmRNA and targeted for degradation. The ribosome is freed to recommence translation, which seems to be the essential function of trans-translation. This Chlamydia trachomatis serovar A (strain ATCC VR-571B / DSM 19440 / HAR-13) protein is SsrA-binding protein.